Reading from the N-terminus, the 58-residue chain is Arabinogalactan protein 21 (58 aa).

The first 24 residues, 1–24, serve as a signal peptide directing secretion; it reads MEAMKMKMMVFIMVVAVAFSAATA. 4-hydroxyproline occurs at positions 30, 32, and 34. Pro-30, Pro-32, and Pro-34 each carry an O-linked (Ara...) hydroxyproline glycan. Ser-36 carries GPI-anchor amidated serine lipidation. Positions 37 to 58 are cleaved as a propeptide — removed in mature form; sequence DAAMFVPALFASVVALASGFIF.

The protein belongs to the AG-peptide AGP family. Contains 4-hydroxyproline; hydroxylated on Pro-30, Pro-32 and Pro-34. In terms of processing, O-glycosylated on hydroxyprolines; noncontiguous hydroxylproline residues are glycosylated with arabinogalactan.

The protein localises to the cell membrane. Proteoglycan that seems to be implicated in diverse developmental roles such as differentiation, cell-cell recognition, embryogenesis and programmed cell death. The polypeptide is Arabinogalactan protein 21 (Arabidopsis thaliana (Mouse-ear cress)).